The sequence spans 348 residues: NADH-ubiquinone oxidoreductase chain 2 (348 aa).

9 helical membrane-spanning segments follow: residues 13-33 (VGLG…WMGL), 60-80 (FLTQ…NAWM), 93-113 (IAST…PMHF), 149-169 (IDPL…GWGG), 178-197 (ILAY…IQYA), 202-219 (LIAL…FLTL), 246-266 (LVLL…KWLI), 274-294 (DLPI…YFYL), and 326-346 (LALF…ILML).

Belongs to the complex I subunit 2 family.

It is found in the mitochondrion inner membrane. The enzyme catalyses a ubiquinone + NADH + 5 H(+)(in) = a ubiquinol + NAD(+) + 4 H(+)(out). Core subunit of the mitochondrial membrane respiratory chain NADH dehydrogenase (Complex I) that is believed to belong to the minimal assembly required for catalysis. Complex I functions in the transfer of electrons from NADH to the respiratory chain. The immediate electron acceptor for the enzyme is believed to be ubiquinone. This Cyprinus carpio (Common carp) protein is NADH-ubiquinone oxidoreductase chain 2 (MT-ND2).